Here is a 323-residue protein sequence, read N- to C-terminus: Mortality factor 4-like protein 1 (323 aa).

The Tudor-knot domain maps to 12-62 (QEGERVLCFHGPLLYEAKCVKVAIKDKQVKYFIHYSGWNKNWDEWVPESRV). The interval 77-143 (QKANQEQYAE…RKKRARVDPT (67 aa)) is disordered. The tract at residues 94 to 227 (PGKKTSGLQQ…VAGIKEYFNV (134 aa)) is sufficient for interaction with SIN3A. Position 104 is an N6-acetyllysine (lysine 104). An interaction with RB1-1 region spans residues 125 to 191 (STSETPQPPR…FYLPAKKNVD (67 aa)). Positions 149-303 (TFMNRVEVKV…FLKYLAKNSA (155 aa)) are sufficient for interaction with PHF12. Residues 152 to 323 (NRVEVKVKIP…APPEYHRKAV (172 aa)) enclose the MRG domain. The tract at residues 284–305 (LALLLNYLHDFLKYLAKNSATL) is interaction with RB1-2.

Component of the NuA4 histone acetyltransferase complex which contains the catalytic subunit KAT5/TIP60 and the subunits EP400, TRRAP/PAF400, BRD8/SMAP, EPC1, DMAP1/DNMAP1, RUVBL1/TIP49, RUVBL2, ING3, actin, ACTL6A/BAF53A, MORF4L1/MRG15, MORF4L2/MRGX, MRGBP, YEATS4/GAS41, VPS72/YL1 and MEAF6. The NuA4 complex interacts with MYC and the adenovirus E1A protein. MORF4L1 may also participate in the formation of NuA4 related complexes which lack the KAT5/TIP60 catalytic subunit, but which include the SWI/SNF related protein SRCAP. Component of the mSin3A histone deacetylase complex, which includes SIN3A, HDAC2, ARID4B, MORF4L1, RBBP4/RbAp48, and RBBP7/RbAp46. May also interact with PHF12 and one or more as yet undefined members of the TLE (transducin-like enhancer of split) family of transcriptional repressors. Component of the SIN3B complex, which includes SIN3B, HDAC2 or HDAC1, PHF12 and MORF4L1. Interacts with RB1 and KAT8. Interacts with the N-terminus of MRFAP1. Found in a complex composed of MORF4L1, MRFAP1 and RB1. Interacts with the entire BRCA complex, which contains BRCA1, PALB2, BRCA2 and RAD51. Interacts with PALB2. Forms a complex with MSL1 and NUPR1.

The protein resides in the nucleus. Component of the NuA4 histone acetyltransferase (HAT) complex which is involved in transcriptional activation of select genes principally by acetylation of nucleosomal histones H4 and H2A. This modification may both alter nucleosome - DNA interactions and promote interaction of the modified histones with other proteins which positively regulate transcription. This complex may be required for the activation of transcriptional programs associated with oncogene and proto-oncogene mediated growth induction, tumor suppressor mediated growth arrest and replicative senescence, apoptosis, and DNA repair. The NuA4 complex ATPase and helicase activities seem to be, at least in part, contributed by the association of RUVBL1 and RUVBL2 with EP400. NuA4 may also play a direct role in DNA repair when directly recruited to sites of DNA damage. As part of the SIN3B complex represses transcription and counteracts the histone acetyltransferase activity of EP300 through the recognition H3K27ac marks by PHF12 and the activity of the histone deacetylase HDAC2. SIN3B complex is recruited downstream of the constitutively active genes transcriptional start sites through interaction with histones and mitigates histone acetylation and RNA polymerase II progression within transcribed regions contributing to the regulation of transcription. Required for homologous recombination repair (HRR) and resistance to mitomycin C (MMC). Involved in the localization of PALB2, BRCA2 and RAD51, but not BRCA1, to DNA-damage foci. This is Mortality factor 4-like protein 1 (Morf4l1) from Rattus norvegicus (Rat).